We begin with the raw amino-acid sequence, 77 residues long: Putative defensin-like protein 30 (77 aa).

The N-terminal stretch at 1–26 is a signal peptide; the sequence is MASSSKCAFLVFLCMIVLLAPSEVHA. 3 cysteine pairs are disulfide-bonded: cysteine 43–cysteine 63, cysteine 49–cysteine 72, and cysteine 53–cysteine 74.

This sequence belongs to the DEFL family.

It is found in the secreted. The polypeptide is Putative defensin-like protein 30 (Arabidopsis thaliana (Mouse-ear cress)).